The primary structure comprises 323 residues: tRNA U34 carboxymethyltransferase (323 aa).

Carboxy-S-adenosyl-L-methionine is bound by residues Lys91, Trp105, Lys110, Gly130, 180–181 (IE), Met196, Tyr200, and Arg315.

This sequence belongs to the class I-like SAM-binding methyltransferase superfamily. CmoB family. In terms of assembly, homotetramer.

The catalysed reaction is carboxy-S-adenosyl-L-methionine + 5-hydroxyuridine(34) in tRNA = 5-carboxymethoxyuridine(34) in tRNA + S-adenosyl-L-homocysteine + H(+). In terms of biological role, catalyzes carboxymethyl transfer from carboxy-S-adenosyl-L-methionine (Cx-SAM) to 5-hydroxyuridine (ho5U) to form 5-carboxymethoxyuridine (cmo5U) at position 34 in tRNAs. This Citrifermentans bemidjiense (strain ATCC BAA-1014 / DSM 16622 / JCM 12645 / Bem) (Geobacter bemidjiensis) protein is tRNA U34 carboxymethyltransferase.